A 738-amino-acid chain; its full sequence is Dipeptidyl peptidase 3 (738 aa).

Ala-2 bears the N-acetylalanine mark. His-450 lines the Zn(2+) pocket. Residue Glu-451 is part of the active site. 2 residues coordinate Zn(2+): His-455 and Glu-508.

Belongs to the peptidase M49 family. Zn(2+) serves as cofactor.

The protein resides in the cytoplasm. It localises to the cytosol. It catalyses the reaction Release of an N-terminal dipeptide from a peptide comprising four or more residues, with broad specificity. Also acts on dipeptidyl 2-naphthylamides.. Cleaves and degrades bioactive peptides, including angiotensin, Leu-enkephalin and Met-enkephalin. Also cleaves Arg-Arg-beta-naphthylamide (in vitro). This is Dipeptidyl peptidase 3 (Dpp3) from Mus musculus (Mouse).